A 1202-amino-acid polypeptide reads, in one-letter code: MDRSEIVARENPVITQRVTNLLQTNAPLLFMPIDIHEVRYGAYTLFMYGSLENGYKAEVRIENIPVFFDVQIESSNTNQLFLKSLLSAENITYERLETLTQRPVMGYREKEKEFAPYIRIFFKSLYERRKAITYLNNMGYNTAADDTTCYYRMVSRELKLPLTSWIQLQHYSYEPHGLVHRFSVTPEDLVSYQDDGPTDHSIVMAYDIETYSPVKGTVPDPNQANDVVFMICMRIFWIHSTEPLASTCITMAPCKKSSEWTTILCSSEKNLLLSFAEQFSRWAPDICTGFNDSRYDWPFIVEKSMQHGILEEIFNKMSLFWHQKLDTILKCYYVKEKRVKISAEKSIISSFLHTPGCLPIDVRNMCMQLYPKAEKTSLKAFLENCGLDSKVDLPYHLMWKYYETRDSEKMADVAYYCIIDAQRCQDLLVRHNVIPDRREVGILSYTSLYDCIYYAGGHKVCNMLIAYAIHDEYGRIACSTIARGKREHGKYPGAFVIDPVKGLEQDKPTTGLDFASLYPSLIMAYNFSPEKFVASREEANSLMAKGESLHYVSFYFNNRLVEGWFVRHNNVPDKMGLYPKVLIDLLNKRTALKQELKKLGEKKECIHESHPGFKELQFRHAMVDAKQKALKIFMNTFYGEAGNNLSPFFLLPLAGGVTSSGQYNLKLVYNFVINKGYGIKYGDTDSLYITCPDSLYTEVTDAYLNSQKTIKHYEQLCHEKVLLSMKAMSTLCAEVNEYLRQDNGTSYLRMAYEEVLFPVCFTGKKKYYGIAHVNTPNFNTKELFIRGIDIIKQGQTKLTKTIGTRIMEESMKLRRPEDHRPPLIEIVKTVLKDAVVNMKQWNFEDFIQTDAWRPDKDNKAVQIFMSRMHARREQLKKHGAAASQFAEPEPGERFSYVIVEKQVQFDIQGHRTDSSRKGDKMEYVSEAKAKNLPIDILFYINNYVLGLCARFINENEEFQPPDNVSNKDEYAQRRAKSYLQKFVQSIHPKDKSVIKQGIVHRQCYKYVHQEIKKKIGIFADLYKEFFNNTTNPIESFIQSTQFMIQYFDGEQKVNHSMKKMIEQHATASNRAGNPAGNPAGNALMRAIFTQLITEEKKIVQALYNKGDAIHDLLTYIINNINYKIATFQTKQMLTFEFSSTHVELLLKLNKTWLILAGIHVAKKHLQALLDSYNNEPPSKTFIQQAIEEECGSIKPSCYDFIS.

A run of 3 repeats spans residues 1071-1074, 1075-1078, and 1079-1082. Positions 1071-1082 are 3 X 4 AA tandem repeats of A-G-[NK]-[PA]; it reads AGNPAGNPAGNA.

The protein belongs to the DNA polymerase type-B family.

The enzyme catalyses DNA(n) + a 2'-deoxyribonucleoside 5'-triphosphate = DNA(n+1) + diphosphate. In terms of biological role, DNA-directed DNA polymerase involved in viral DNA replication. This is DNA polymerase beta (DPOL) from Ornithodoros (relapsing fever ticks).